A 441-amino-acid polypeptide reads, in one-letter code: Ribulose bisphosphate carboxylase large chain (441 aa).

At Lys-5 the chain carries N6,N6,N6-trimethyllysine. The substrate site is built by Asn-114 and Thr-164. Catalysis depends on Lys-166, which acts as the Proton acceptor. Position 168 (Lys-168) interacts with substrate. Mg(2+) contacts are provided by Lys-192, Asp-194, and Glu-195. Lys-192 bears the N6-carboxylysine mark. The active-site Proton acceptor is the His-285. Residues Arg-286, His-318, and Ser-370 each contribute to the substrate site.

This sequence belongs to the RuBisCO large chain family. Type I subfamily. Heterohexadecamer of 8 large chains and 8 small chains; disulfide-linked. The disulfide link is formed within the large subunit homodimers. It depends on Mg(2+) as a cofactor. In terms of processing, the disulfide bond which can form in the large chain dimeric partners within the hexadecamer appears to be associated with oxidative stress and protein turnover.

The protein resides in the plastid. The protein localises to the chloroplast. It catalyses the reaction 2 (2R)-3-phosphoglycerate + 2 H(+) = D-ribulose 1,5-bisphosphate + CO2 + H2O. The enzyme catalyses D-ribulose 1,5-bisphosphate + O2 = 2-phosphoglycolate + (2R)-3-phosphoglycerate + 2 H(+). RuBisCO catalyzes two reactions: the carboxylation of D-ribulose 1,5-bisphosphate, the primary event in carbon dioxide fixation, as well as the oxidative fragmentation of the pentose substrate in the photorespiration process. Both reactions occur simultaneously and in competition at the same active site. In Drosera petiolaris (Woolly sundew), this protein is Ribulose bisphosphate carboxylase large chain.